A 259-amino-acid chain; its full sequence is Probable ABC transporter permease protein RP096 (259 aa).

5 consecutive transmembrane segments (helical) span residues 13–35, 49–69, 148–168, 195–215, and 237–257; these read TIKF…SSII, LFIG…SGAV, VIAA…IGVM, PIDV…ISII, and AVVN…ELFF.

The protein belongs to the MlaE permease family.

The protein resides in the cell inner membrane. Its function is as follows. Could be part of an ABC transporter complex. The sequence is that of Probable ABC transporter permease protein RP096 from Rickettsia prowazekii (strain Madrid E).